The primary structure comprises 560 residues: Dimethylaniline monooxygenase [N-oxide-forming] 4 (560 aa).

FAD-binding positions include 9-13 (GAGVS), Glu32, and 40-41 (LW). Residues 60 to 61 (TN) and 195 to 198 (TGGD) contribute to the NADP(+) site. Residues 519–539 (APVLIVSLLLIYKSSLFLELV) traverse the membrane as a helical segment.

It belongs to the FMO family. Requires FAD as cofactor. As to expression, detected in liver and kidney (at protein level).

The protein localises to the microsome membrane. Its subcellular location is the endoplasmic reticulum membrane. It carries out the reaction N,N-dimethylaniline + NADPH + O2 + H(+) = N,N-dimethylaniline N-oxide + NADP(+) + H2O. Its function is as follows. This protein is involved in the oxidative metabolism of a variety of xenobiotics such as drugs and pesticides. The polypeptide is Dimethylaniline monooxygenase [N-oxide-forming] 4 (Fmo4) (Rattus norvegicus (Rat)).